We begin with the raw amino-acid sequence, 125 residues long: Snaclec VP12 subunit B (125 aa).

Disulfide bonds link C4/C15, C32/C121, and C98/C113. The C-type lectin domain maps to 11 to 122 (FEKYCYKVFQ…CNDPRYFVCK (112 aa)).

Belongs to the snaclec family. In terms of assembly, heterodimer of subunits alpha and beta; disulfide-linked. Expressed by the venom gland.

The protein resides in the secreted. Its function is as follows. Inhibits integrin alpha-2/beta-1- (ITGA2/ITGB1) dependent melanoma metastasis. The chain is Snaclec VP12 subunit B from Daboia palaestinae (Palestine viper).